A 158-amino-acid polypeptide reads, in one-letter code: Protein Smg homolog (158 aa).

It belongs to the Smg family.

In Vibrio atlanticus (strain LGP32) (Vibrio splendidus (strain Mel32)), this protein is Protein Smg homolog.